The primary structure comprises 512 residues: MSASWLTLAVLCATLGAGPGHGEAETRECIYYNANWELEKTNQSGVERCEGEKDKRLHCYASWRNNSGSIELVKKGCWLDDFNCYDRQECVATEENPQVFFCCCEGNYCNEKFTHLPEVTGPEVIYEPPPPTPSLLNILVYSLLPIAVLSVAILLAFWMYRHRKPPYGHVDINEDPGPPPPSPLVGLKPLQLLEIKARGRFGCVWKAQLMNDYVAVKIFPIQDKQSWQSEREIFNTPGMKHENLLQFIAAEKRGTNLETELWLITAFHDKGSLTDYLKGNIISWNELCHVAETMARGLSYLHEDVPWCKGEGHKPAIAHRDFKSKNVLLKNDLTAVLADFGLAVRFEPGKPPGDTHGQVGTRRYMAPEVLEGAINFQRDAFLRIDMYAMGLVLWELVSRCRAVDGPVDEYMLPFEEEIGQHPSLEDLQEVVVHKKMRPVFKDHWLKHPGLAQLCVTIEECWDHDAEARLSAGCVEERIAQIRKSVNGTTSDCLVSIVTSVTNVDLPPKESSI.

The first 24 residues, 1–24 (MSASWLTLAVLCATLGAGPGHGEA), serve as a signal peptide directing secretion. Residues 25-137 (ETRECIYYNA…PPPPTPSLLN (113 aa)) are Extracellular-facing. Disulfide bonds link cysteine 29–cysteine 59, cysteine 49–cysteine 77, cysteine 84–cysteine 103, cysteine 90–cysteine 102, and cysteine 104–cysteine 109. Residues asparagine 42 and asparagine 65 are each glycosylated (N-linked (GlcNAc...) asparagine). Residues 138–158 (ILVYSLLPIAVLSVAILLAFW) traverse the membrane as a helical segment. Over 159-512 (MYRHRKPPYG…VDLPPKESSI (354 aa)) the chain is Cytoplasmic. A Protein kinase domain is found at 190–478 (LQLLEIKARG…LSAGCVEERI (289 aa)). ATP contacts are provided by residues 196-204 (KARGRFGCV) and lysine 217. Aspartate 321 (proton acceptor) is an active-site residue.

This sequence belongs to the protein kinase superfamily. TKL Ser/Thr protein kinase family. TGFB receptor subfamily. Mg(2+) is required as a cofactor. Requires Mn(2+) as cofactor. Not expressed in hen anterior pituitary during the ovulatory cycle but expressed in the ovarian follicle.

It localises to the membrane. It catalyses the reaction L-threonyl-[receptor-protein] + ATP = O-phospho-L-threonyl-[receptor-protein] + ADP + H(+). It carries out the reaction L-seryl-[receptor-protein] + ATP = O-phospho-L-seryl-[receptor-protein] + ADP + H(+). Its function is as follows. On ligand binding, forms a receptor complex consisting of two type II and two type I transmembrane serine/threonine kinases. Type II receptors phosphorylate and activate type I receptors which autophosphorylate, then bind and activate SMAD transcriptional regulators. Receptor for activin A, activin B and inhibin A. May modulate neuropeptide expression in dorsal root ganglia (DRG) neurons and ovarian follicle development. The chain is Activin receptor type-2B (ACVR2B) from Gallus gallus (Chicken).